A 72-amino-acid chain; its full sequence is High-potential iron-sulfur protein isozyme 1 (72 aa).

[4Fe-4S] cluster-binding residues include Cys34, Cys37, Cys51, and Cys65.

Belongs to the high-potential iron-sulfur protein (HiPIP) family. Homodimer.

In terms of biological role, specific class of high-redox-potential 4Fe-4S ferredoxins. Functions in anaerobic electron transport in most purple and in some other photosynthetic bacteria and in at least one genus (Paracoccus) of halophilic, denitrifying bacteria. This is High-potential iron-sulfur protein isozyme 1 (hip1) from Ectothiorhodospira shaposhnikovii (Ectothiorhodospira vacuolata).